A 393-amino-acid chain; its full sequence is Elongation factor Tu (393 aa).

The region spanning 10-203 (KPHVNIGTIG…AVDEFIPEPV (194 aa)) is the tr-type G domain. The segment at 19 to 26 (GHVDHGKT) is G1. Position 19 to 26 (19 to 26 (GHVDHGKT)) interacts with GTP. Threonine 26 serves as a coordination point for Mg(2+). A G2 region spans residues 60–64 (GITIS). The tract at residues 81-84 (DCPG) is G3. GTP-binding positions include 81 to 85 (DCPGH) and 136 to 139 (NKVD). The segment at 136–139 (NKVD) is G4. The segment at 173–175 (SAL) is G5.

The protein belongs to the TRAFAC class translation factor GTPase superfamily. Classic translation factor GTPase family. EF-Tu/EF-1A subfamily. In terms of assembly, monomer.

The protein localises to the cytoplasm. The catalysed reaction is GTP + H2O = GDP + phosphate + H(+). Its function is as follows. GTP hydrolase that promotes the GTP-dependent binding of aminoacyl-tRNA to the A-site of ribosomes during protein biosynthesis. In Chlorobium limicola (strain DSM 245 / NBRC 103803 / 6330), this protein is Elongation factor Tu.